We begin with the raw amino-acid sequence, 301 residues long: Acetylglutamate kinase (301 aa).

Substrate contacts are provided by residues 68–69 (GG), Arg90, and Asn195.

Belongs to the acetylglutamate kinase family. ArgB subfamily.

The protein localises to the cytoplasm. It carries out the reaction N-acetyl-L-glutamate + ATP = N-acetyl-L-glutamyl 5-phosphate + ADP. It functions in the pathway amino-acid biosynthesis; L-arginine biosynthesis; N(2)-acetyl-L-ornithine from L-glutamate: step 2/4. Functionally, catalyzes the ATP-dependent phosphorylation of N-acetyl-L-glutamate. This is Acetylglutamate kinase from Pseudomonas putida (strain GB-1).